The chain runs to 454 residues: Divalent metal cation transporter MntH (454 aa).

The segment at 1 to 21 (MSDAEATAPRSSWRFAGRDED) is disordered. The next 11 helical transmembrane spans lie at 45–65 (LFAF…PGNW), 78–98 (TLLF…ALAA), 122–142 (FVLW…EVIG), 153–173 (IPLI…LLLM), 182–202 (AFVI…IFVA), 220–240 (IVTN…TVMP), 275–295 (IALM…AVAF), 312–332 (LLSP…ALLA), 368–388 (GLAI…GTGQ), 389–409 (LLVF…VPLV), and 426–446 (GVAA…FKLL).

The protein belongs to the NRAMP family.

It localises to the cell inner membrane. In terms of biological role, h(+)-stimulated, divalent metal cation uptake system. This is Divalent metal cation transporter MntH from Mesorhizobium japonicum (strain LMG 29417 / CECT 9101 / MAFF 303099) (Mesorhizobium loti (strain MAFF 303099)).